Consider the following 288-residue polypeptide: Quinate/shikimate dehydrogenase (288 aa).

K71 and D107 together coordinate substrate. Residues 132-135 (AGGA), 155-158 (NRRD), K205, 232-235 (CVYN), and G255 each bind NAD(+).

The protein belongs to the shikimate dehydrogenase family. In terms of assembly, homodimer.

It carries out the reaction L-quinate + NAD(+) = 3-dehydroquinate + NADH + H(+). The enzyme catalyses L-quinate + NADP(+) = 3-dehydroquinate + NADPH + H(+). It catalyses the reaction shikimate + NADP(+) = 3-dehydroshikimate + NADPH + H(+). The catalysed reaction is shikimate + NAD(+) = 3-dehydroshikimate + NADH + H(+). Its pathway is metabolic intermediate biosynthesis; chorismate biosynthesis; chorismate from D-erythrose 4-phosphate and phosphoenolpyruvate: step 4/7. Functionally, the actual biological function of YdiB remains unclear, nor is it known whether 3-dehydroshikimate or quinate represents the natural substrate. Catalyzes the reversible NAD-dependent reduction of both 3-dehydroshikimate (DHSA) and 3-dehydroquinate to yield shikimate (SA) and quinate, respectively. It can use both NAD or NADP for catalysis, however it has higher catalytic efficiency with NAD. The sequence is that of Quinate/shikimate dehydrogenase from Shigella sonnei (strain Ss046).